Reading from the N-terminus, the 169-residue chain is Fumarase E (169 aa).

It belongs to the MtlR/FumE family.

It catalyses the reaction (S)-malate = fumarate + H2O. Functionally, in vitro catalyzes the addition of water to fumarate, forming malate. Cannot catalyze the reverse reaction. Cannot use the cis-isomer maleate as substrate. The sequence is that of Fumarase E from Escherichia coli (strain K12).